Reading from the N-terminus, the 53-residue chain is Beta-defensin C7 (53 aa).

3 cysteine pairs are disulfide-bonded: C20/C49, C27/C42, and C32/C50.

This sequence belongs to the beta-defensin family.

Its subcellular location is the secreted. Has bactericidal activity. This is Beta-defensin C7 from Bos taurus (Bovine).